We begin with the raw amino-acid sequence, 537 residues long: Phosphoenolpyruvate carboxykinase (ATP) (537 aa).

The substrate site is built by R61, Y195, and K201. ATP contacts are provided by residues K201, H220, and 236 to 244 (GLSGTGKTT). K201 and H220 together coordinate Mn(2+). D257 provides a ligand contact to Mn(2+). 3 residues coordinate ATP: E285, R323, and T448. R323 provides a ligand contact to substrate.

Belongs to the phosphoenolpyruvate carboxykinase (ATP) family. The cofactor is Mn(2+).

It localises to the cytoplasm. The enzyme catalyses oxaloacetate + ATP = phosphoenolpyruvate + ADP + CO2. Its pathway is carbohydrate biosynthesis; gluconeogenesis. Functionally, involved in the gluconeogenesis. Catalyzes the conversion of oxaloacetate (OAA) to phosphoenolpyruvate (PEP) through direct phosphoryl transfer between the nucleoside triphosphate and OAA. This is Phosphoenolpyruvate carboxykinase (ATP) from Parvibaculum lavamentivorans (strain DS-1 / DSM 13023 / NCIMB 13966).